The primary structure comprises 552 residues: Urocanate hydratase (552 aa).

NAD(+) is bound by residues 49-50, glutamine 127, 173-175, aspartate 193, 239-240, 260-264, 270-271, and tyrosine 319; these read GG, GMG, NA, QTSAH, and YI. Cysteine 407 is an active-site residue. Residue glycine 489 participates in NAD(+) binding.

This sequence belongs to the urocanase family. NAD(+) is required as a cofactor.

It is found in the cytoplasm. It carries out the reaction 4-imidazolone-5-propanoate = trans-urocanate + H2O. It participates in amino-acid degradation; L-histidine degradation into L-glutamate; N-formimidoyl-L-glutamate from L-histidine: step 2/3. Catalyzes the conversion of urocanate to 4-imidazolone-5-propionate. This chain is Urocanate hydratase, found in Bacillus mycoides (strain KBAB4) (Bacillus weihenstephanensis).